A 358-amino-acid chain; its full sequence is Peptide chain release factor 1 (358 aa).

At Gln-233 the chain carries N5-methylglutamine.

Belongs to the prokaryotic/mitochondrial release factor family. Methylated by PrmC. Methylation increases the termination efficiency of RF1.

The protein localises to the cytoplasm. Peptide chain release factor 1 directs the termination of translation in response to the peptide chain termination codons UAG and UAA. In Listeria monocytogenes serovar 1/2a (strain ATCC BAA-679 / EGD-e), this protein is Peptide chain release factor 1.